A 417-amino-acid chain; its full sequence is Serine hydroxymethyltransferase (417 aa).

(6S)-5,6,7,8-tetrahydrofolate-binding positions include leucine 121 and 125-127 (GHL). An N6-(pyridoxal phosphate)lysine modification is found at lysine 229. Position 355–357 (355–357 (SPF)) interacts with (6S)-5,6,7,8-tetrahydrofolate.

This sequence belongs to the SHMT family. As to quaternary structure, homodimer. It depends on pyridoxal 5'-phosphate as a cofactor.

It localises to the cytoplasm. The catalysed reaction is (6R)-5,10-methylene-5,6,7,8-tetrahydrofolate + glycine + H2O = (6S)-5,6,7,8-tetrahydrofolate + L-serine. It participates in one-carbon metabolism; tetrahydrofolate interconversion. It functions in the pathway amino-acid biosynthesis; glycine biosynthesis; glycine from L-serine: step 1/1. Catalyzes the reversible interconversion of serine and glycine with tetrahydrofolate (THF) serving as the one-carbon carrier. This reaction serves as the major source of one-carbon groups required for the biosynthesis of purines, thymidylate, methionine, and other important biomolecules. Also exhibits THF-independent aldolase activity toward beta-hydroxyamino acids, producing glycine and aldehydes, via a retro-aldol mechanism. In Edwardsiella ictaluri (strain 93-146), this protein is Serine hydroxymethyltransferase.